Consider the following 169-residue polypeptide: Large ribosomal subunit protein uL10 (169 aa).

The protein belongs to the universal ribosomal protein uL10 family. Part of the ribosomal stalk of the 50S ribosomal subunit. The N-terminus interacts with L11 and the large rRNA to form the base of the stalk. The C-terminus forms an elongated spine to which L12 dimers bind in a sequential fashion forming a multimeric L10(L12)X complex.

Its function is as follows. Forms part of the ribosomal stalk, playing a central role in the interaction of the ribosome with GTP-bound translation factors. In Rickettsia rickettsii (strain Iowa), this protein is Large ribosomal subunit protein uL10.